Consider the following 168-residue polypeptide: Pathogenesis-related protein 1C (168 aa).

The first 30 residues, 1-30 (MEFVLFSQMSSFFLVSTLLLFLIISHSCHA), serve as a signal peptide directing secretion. One can recognise an SCP domain in the interval 38-156 (LDAHNTARAD…NGGYIVSCNY (119 aa)).

It belongs to the CRISP family. In terms of processing, three disulfide bonds are present.

Its subcellular location is the vacuole. Probably involved in the defense reaction of plants against pathogens. This chain is Pathogenesis-related protein 1C, found in Nicotiana tabacum (Common tobacco).